The following is a 125-amino-acid chain: Ribosome-binding factor A (125 aa).

The protein belongs to the RbfA family. As to quaternary structure, monomer. Binds 30S ribosomal subunits, but not 50S ribosomal subunits or 70S ribosomes.

It localises to the cytoplasm. Functionally, one of several proteins that assist in the late maturation steps of the functional core of the 30S ribosomal subunit. Associates with free 30S ribosomal subunits (but not with 30S subunits that are part of 70S ribosomes or polysomes). Required for efficient processing of 16S rRNA. May interact with the 5'-terminal helix region of 16S rRNA. This is Ribosome-binding factor A from Kosmotoga olearia (strain ATCC BAA-1733 / DSM 21960 / TBF 19.5.1).